The chain runs to 210 residues: uncharacterized protein (210 aa).

Low complexity predominate over residues 101-114 (QELPEPSSPQSQSS). Positions 101 to 166 (QELPEPSSPQ…SSGVSSDLQK (66 aa)) are disordered. The span at 147-164 (RSTSPVTASTSSGVSSDL) shows a compositional bias: polar residues.

This is an uncharacterized protein from Alcelaphine herpesvirus 1 (strain C500) (AlHV-1).